The following is a 300-amino-acid chain: Haloalkane dehalogenase 1 (300 aa).

An AB hydrolase-1 domain is found at 47–176; the sequence is PPIVLLHGEP…FARYSPVLPA (130 aa). Aspartate 123 (nucleophile) is an active-site residue. The Proton donor role is filled by aspartate 250. Histidine 279 functions as the Proton acceptor in the catalytic mechanism.

The protein belongs to the haloalkane dehalogenase family. Type 1 subfamily. Monomer.

It carries out the reaction 1-haloalkane + H2O = a halide anion + a primary alcohol + H(+). In terms of biological role, catalyzes hydrolytic cleavage of carbon-halogen bonds in halogenated aliphatic compounds, leading to the formation of the corresponding primary alcohols, halide ions and protons. The chain is Haloalkane dehalogenase 1 (dhmA1) from Mycobacterium bovis (strain ATCC BAA-935 / AF2122/97).